A 427-amino-acid polypeptide reads, in one-letter code: Glutamyl-tRNA(Gln) amidotransferase subunit D (427 aa).

The span at 1-18 shows a compositional bias: basic and acidic residues; that stretch reads MTADPGDRVRVTHGDASH. The segment at 1-20 is disordered; the sequence is MTADPGDRVRVTHGDASHEG. The 334-residue stretch at 80 to 413 folds into the Asparaginase/glutaminase domain; it reads PTIALISTGG…DDPEAAMQES (334 aa). Catalysis depends on residues threonine 90, threonine 166, aspartate 167, and lysine 243.

This sequence belongs to the asparaginase 1 family. GatD subfamily. In terms of assembly, heterodimer of GatD and GatE.

The enzyme catalyses L-glutamyl-tRNA(Gln) + L-glutamine + ATP + H2O = L-glutaminyl-tRNA(Gln) + L-glutamate + ADP + phosphate + H(+). Allows the formation of correctly charged Gln-tRNA(Gln) through the transamidation of misacylated Glu-tRNA(Gln) in organisms which lack glutaminyl-tRNA synthetase. The reaction takes place in the presence of glutamine and ATP through an activated gamma-phospho-Glu-tRNA(Gln). The GatDE system is specific for glutamate and does not act on aspartate. The polypeptide is Glutamyl-tRNA(Gln) amidotransferase subunit D (Halobacterium salinarum (strain ATCC 29341 / DSM 671 / R1)).